The sequence spans 60 residues: Large ribosomal subunit protein eL37 (60 aa).

Cys-18, Cys-21, Cys-33, and Cys-36 together coordinate Zn(2+). A C4-type zinc finger spans residues 18–36; it reads CRRCGKNSYHVRKKVCAAC.

The protein belongs to the eukaryotic ribosomal protein eL37 family. Zn(2+) serves as cofactor.

Binds to the 23S rRNA. This chain is Large ribosomal subunit protein eL37 (rpl37e), found in Methanothermobacter thermautotrophicus (strain ATCC 29096 / DSM 1053 / JCM 10044 / NBRC 100330 / Delta H) (Methanobacterium thermoautotrophicum).